The chain runs to 171 residues: Probable deoxyuridine 5'-triphosphate nucleotidohydrolase (171 aa).

The protein belongs to the dCTP deaminase family. Archaeal dUTPase subfamily.

The catalysed reaction is dUTP + H2O = dUMP + diphosphate + H(+). It functions in the pathway pyrimidine metabolism; dUMP biosynthesis; dUMP from dCTP (dUTP route): step 2/2. This enzyme is involved in nucleotide metabolism: it produces dUMP, the immediate precursor of thymidine nucleotides and it decreases the intracellular concentration of dUTP so that uracil cannot be incorporated into DNA. The sequence is that of Probable deoxyuridine 5'-triphosphate nucleotidohydrolase from Methanosarcina mazei (strain ATCC BAA-159 / DSM 3647 / Goe1 / Go1 / JCM 11833 / OCM 88) (Methanosarcina frisia).